Here is a 595-residue protein sequence, read N- to C-terminus: MRSALSNRTPRRFRSRDWFDNPDHIDMTALYLERFMNYGITPEELRSGKPIIGIAQTGSDISPCNRIHLDLVQRVRDGIRDAGGIPMEFPVHPIFENCRRPTAALDRNLSYLGLVETLHGYPIDAVVLTTGCDKTTPAGIMAATTVNIPAIVLSGGPMLDGWHENELVGSGTVIWRSRRKLAAGEITEEEFIDRAASSAPSAGHCNTMGTASTMNAVAEALGLSLTGCAAIPAPYRERGQMAYKTGQRIVDLAYDDVKPLDILTKQAFENAIALVAAAGGSTNAQPHIVAMARHAGVEITADDWRAAYDIPLIVNMQPAGKYLGERFHRAGGAPAVLWELLQQGRLHGDVLTVTGKTMSENLQGRETSDREVIFPYHEPLAEKAGFLVLKGNLFDFAIMKSSVIGEEFRKRYLSQPGQEGVFEARAIVFDGSDDYHKRINDPALEIDERCILVIRGAGPIGWPGSAEVVNMQPPDHLLKKGIMSLPTLGDGRQSGTADSPSILNASPESAIGGGLSWLRTGDTIRIDLNTGRCDALVDEATIAARKQDGIPAVPATMTPWQEIYRAHASQLDTGGVLEFAVKYQDLAAKLPRHNH.

Cys-64 provides a ligand contact to [2Fe-2S] cluster. Position 96 (Glu-96) interacts with Mg(2+). Position 132 (Cys-132) interacts with [2Fe-2S] cluster. Position 133 (Asp-133) interacts with Mg(2+). [2Fe-2S] cluster is bound at residue Cys-205. Glu-467 is a binding site for Mg(2+).

Belongs to the IlvD/Edd family. As to quaternary structure, homotetramer. [2Fe-2S] cluster serves as cofactor. It depends on Mg(2+) as a cofactor.

The catalysed reaction is D-xylonate = 2-dehydro-3-deoxy-D-arabinonate + H2O. It catalyses the reaction D-gluconate = 2-dehydro-3-deoxy-D-gluconate + H2O. It participates in carbohydrate metabolism; D-xylose degradation. Its function is as follows. Catalyzes the dehydration of D-xylonate to 2-dehydro-3-deoxy-D-arabinonate during D-xylose degradation. Can also dehydrate D-gluconate, with similar catalytic efficiency. Has weak activity with D-galactonate, D-fuconate and L-arabinonate. In Caulobacter vibrioides (strain ATCC 19089 / CIP 103742 / CB 15) (Caulobacter crescentus), this protein is D-xylonate dehydratase.